Consider the following 198-residue polypeptide: NADH-quinone oxidoreductase subunit I (198 aa).

2 4Fe-4S ferredoxin-type domains span residues 42–72 (LNRW…VEGA) and 88–117 (RVYE…MTND). [4Fe-4S] cluster is bound by residues C52, C55, C58, C62, C97, C100, C103, and C107. Positions 137 to 198 (APLKEGMEQP…DTQHKDEEAA (62 aa)) are disordered. The span at 182–198 (AHRDDDNDTQHKDEEAA) shows a compositional bias: basic and acidic residues.

The protein belongs to the complex I 23 kDa subunit family. NDH-1 is composed of 14 different subunits. Subunits NuoA, H, J, K, L, M, N constitute the membrane sector of the complex. [4Fe-4S] cluster serves as cofactor.

The protein localises to the cell membrane. It catalyses the reaction a quinone + NADH + 5 H(+)(in) = a quinol + NAD(+) + 4 H(+)(out). Functionally, NDH-1 shuttles electrons from NADH, via FMN and iron-sulfur (Fe-S) centers, to quinones in the respiratory chain. The immediate electron acceptor for the enzyme in this species is believed to be ubiquinone. Couples the redox reaction to proton translocation (for every two electrons transferred, four hydrogen ions are translocated across the cytoplasmic membrane), and thus conserves the redox energy in a proton gradient. This Cutibacterium acnes (strain DSM 16379 / KPA171202) (Propionibacterium acnes) protein is NADH-quinone oxidoreductase subunit I.